Reading from the N-terminus, the 621-residue chain is F-box/LRR-repeat protein 4 (621 aa).

Asymmetric dimethylarginine is present on Arg28. The 56-residue stretch at 277 to 332 folds into the F-box domain; the sequence is NGYFDKLPYELIQLILNHLTLPDLCRLAQTCKLLNQHCCDPLQYIHLNLQPYWAKL. 9 LRR repeats span residues 376–397, 402–421, 427–448, 452–474, 480–501, 504–524, 532–558, 559–583, and 584–609; these read ELVR…EIIS, NLQD…AFSH, GLKR…SILN, DLQH…ASMI, KLRT…AELA, CPLL…STGC, LPNL…ASNC, TRLR…LLES, and CKDL…LSAS.

In terms of assembly, part of a SCF (SKP1-CUL1-F-box) protein ligase complex. Interacts with FAF2 and VCP. Interacts with PPTC7; this interaction promotes destruction of BNIP3 and NIX and mitophagy suppression.

Its subcellular location is the cytoplasm. The protein localises to the nucleus. The protein resides in the mitochondrion outer membrane. Substrate-recognition component of the mitochondria-localized SCF-FBXL4 ubiquitin E3 ligase complex that plays a role in the restriction of mitophagy by controlling the degradation of BNIP3 and NIX mitophagy receptors. Also rescues mitochondrial injury through reverting hyperactivation of DRP1-mediated mitochondrial fission. In Bos taurus (Bovine), this protein is F-box/LRR-repeat protein 4 (FBXL4).